The chain runs to 320 residues: Cytochrome c biogenesis protein CcsA (320 aa).

The next 8 membrane-spanning stretches (helical) occupy residues 14-34 (SFFL…YINI), 37-57 (ITIL…TFLL), 68-88 (LSNL…IHLI), 97-117 (WLGI…TLSL), 143-163 (MMLS…ILII), 228-248 (VISL…VWAN), 263-283 (WALI…IKGW), and 289-309 (AIIA…VNLL).

This sequence belongs to the CcmF/CycK/Ccl1/NrfE/CcsA family. In terms of assembly, may interact with Ccs1.

The protein localises to the plastid. Its subcellular location is the chloroplast thylakoid membrane. Its function is as follows. Required during biogenesis of c-type cytochromes (cytochrome c6 and cytochrome f) at the step of heme attachment. This is Cytochrome c biogenesis protein CcsA from Marchantia polymorpha (Common liverwort).